The chain runs to 337 residues: Na(+)/H(+) exchange regulatory cofactor NHE-RF2 (337 aa).

A PDZ 1 domain is found at 11-91 (LCRLVRGEQG…QTQLLVVDKE (81 aa)). The tract at residues 112-145 (LPPAHNPWEPKPDWACSGSLGSDTGQKDVNGPPR) is disordered. 7 positions are modified to phosphoserine: Ser130, Ser183, Ser186, Ser254, Ser269, Ser280, and Ser303. One can recognise a PDZ 2 domain in the interval 151 to 231 (LCHLRRGPQG…EARLLVVDPE (81 aa)). Residues 242–337 (VPTEEHVEGP…NRKREIFSNF (96 aa)) are disordered. Over residues 255-275 (PVTNGTSPAQLNGGSVCSSRS) the composition is skewed to polar residues. Residues 327-337 (WNRKREIFSNF) are compositionally biased toward basic and acidic residues.

Homodimer, and heterodimer with NHERF1. Binds PDZK1. Interacts with SRY. Binds ADRB2, SLC9A3, P2RY1, P2YR2, RDX and LPAR2. Interacts with MCC. Found in a complex with EZR, PODXL and NHERF2. Interacts (via the PDZ domains) with PODXL (via the C-terminal PDZ-binding motif DTHL); interaction is detected in glomerular epithelium cells. Interacts with SGK1 and KCNJ1/ROMK1. Interacts (via the PDZ domains) with SLC26A6.

It is found in the endomembrane system. The protein localises to the nucleus. The protein resides in the apical cell membrane. Its function is as follows. Scaffold protein that connects plasma membrane proteins with members of the ezrin/moesin/radixin family and thereby helps to link them to the actin cytoskeleton and to regulate their surface expression. Necessary for cAMP-mediated phosphorylation and inhibition of SLC9A3. May also act as scaffold protein in the nucleus. This chain is Na(+)/H(+) exchange regulatory cofactor NHE-RF2 (Nherf2), found in Mus musculus (Mouse).